A 512-amino-acid polypeptide reads, in one-letter code: GMP synthase [glutamine-hydrolyzing] (512 aa).

The Glutamine amidotransferase type-1 domain occupies 7-197 (TILILDFGGQ…LFEVCDCSAD (191 aa)). Residue Cys84 is the Nucleophile of the active site. Residues His171 and Glu173 contribute to the active site. Positions 198–387 (WTMDSLIEQT…LGIPDEILYR (190 aa)) constitute a GMPS ATP-PPase domain. 225–231 (SGGVDSA) is a binding site for ATP.

Homodimer.

It carries out the reaction XMP + L-glutamine + ATP + H2O = GMP + L-glutamate + AMP + diphosphate + 2 H(+). The protein operates within purine metabolism; GMP biosynthesis; GMP from XMP (L-Gln route): step 1/1. Catalyzes the synthesis of GMP from XMP. This Caldanaerobacter subterraneus subsp. tengcongensis (strain DSM 15242 / JCM 11007 / NBRC 100824 / MB4) (Thermoanaerobacter tengcongensis) protein is GMP synthase [glutamine-hydrolyzing].